We begin with the raw amino-acid sequence, 158 residues long: NADPH-dependent 7-cyano-7-deazaguanine reductase (158 aa).

The segment covering 1-13 has biased composition (polar residues); that stretch reads MAKRSNTTMTSAG. Residues 1–37 are disordered; the sequence is MAKRSNTTMTSAGLQLGREVAPPDSPETAKLDRVPNP. Residues 27–37 show a composition bias toward basic and acidic residues; sequence ETAKLDRVPNP. Cys-56 serves as the catalytic Thioimide intermediate. Residue Asp-63 is the Proton donor of the active site. Residues 78–80 and 97–98 contribute to the substrate site; these read VES and HE.

It belongs to the GTP cyclohydrolase I family. QueF type 1 subfamily.

It is found in the cytoplasm. It carries out the reaction 7-aminomethyl-7-carbaguanine + 2 NADP(+) = 7-cyano-7-deazaguanine + 2 NADPH + 3 H(+). The protein operates within tRNA modification; tRNA-queuosine biosynthesis. Catalyzes the NADPH-dependent reduction of 7-cyano-7-deazaguanine (preQ0) to 7-aminomethyl-7-deazaguanine (preQ1). This chain is NADPH-dependent 7-cyano-7-deazaguanine reductase, found in Bradyrhizobium sp. (strain ORS 278).